A 1072-amino-acid chain; its full sequence is Integrator complex subunit 3 homolog (1072 aa).

2 disordered regions span residues Tyr-920–Ser-943 and Asp-1002–Asp-1072. A phosphoserine mark is found at Ser-1042, Ser-1043, Ser-1047, and Ser-1048.

It belongs to the Integrator subunit 3 family. As to quaternary structure, belongs to the multiprotein complex Integrator, at least composed of IntS1, IntS2, IntS3, IntS4, omd/IntS5, IntS6, defl/IntS7, IntS8, IntS9, IntS10, IntS11, IntS12, asun/IntS13, IntS14 and IntS15. The core complex associates with protein phosphatase 2A subunits mts/PP2A and Pp2A-29B, to form the Integrator-PP2A (INTAC) complex.

The protein localises to the nucleus. It is found in the cytoplasm. In terms of biological role, component of the integrator complex, a multiprotein complex that terminates RNA polymerase II (Pol II) transcription in the promoter-proximal region of genes. The integrator complex provides a quality checkpoint during transcription elongation by driving premature transcription termination of transcripts that are unfavorably configured for transcriptional elongation: the complex terminates transcription by (1) catalyzing dephosphorylation of the C-terminal domain (CTD) of Pol II subunit Polr2A/Rbp1 and Spt5, and (2) degrading the exiting nascent RNA transcript via endonuclease activity. The integrator complex is also involved in the 3'-end processing of the U7 snRNA, and also the spliceosomal snRNAs U1, U2, U4 and U5. The polypeptide is Integrator complex subunit 3 homolog (IntS3) (Drosophila yakuba (Fruit fly)).